The primary structure comprises 219 residues: Auxin-responsive protein IAA24 (219 aa).

Residues 24 to 28 carry the EAR-like (transcriptional repression) motif; the sequence is LCLRL. 2 disordered regions span residues 24–88 and 109–128; these read LCLR…AKAQ and AAAATKKGGDEKQKQQQQGG. A compositionally biased stretch (polar residues) spans 60 to 71; sequence STDSMASGTGTS. Positions 129-215 constitute a PB1 domain; the sequence is GLYVKVSMDG…SCKKLRIMKG (87 aa).

Belongs to the Aux/IAA family. Homodimers and heterodimers. As to expression, highly expressed in flowers. Expressed in seedlings.

The protein resides in the nucleus. In terms of biological role, aux/IAA proteins are short-lived transcriptional factors that function as repressors of early auxin response genes at low auxin concentrations. The protein is Auxin-responsive protein IAA24 (IAA24) of Oryza sativa subsp. japonica (Rice).